Reading from the N-terminus, the 658-residue chain is Threonine--tRNA ligase (658 aa).

The region spanning 1-64 (MSFSISLSFP…EQSGQVEIIT (64 aa)) is the TGS domain. Residues 246–549 (DHRRLGREMD…LIENFAGHMP (304 aa)) form a catalytic region. Zn(2+) contacts are provided by Cys-343, His-394, and His-526.

This sequence belongs to the class-II aminoacyl-tRNA synthetase family. Homodimer. It depends on Zn(2+) as a cofactor.

Its subcellular location is the cytoplasm. It catalyses the reaction tRNA(Thr) + L-threonine + ATP = L-threonyl-tRNA(Thr) + AMP + diphosphate + H(+). Functionally, catalyzes the attachment of threonine to tRNA(Thr) in a two-step reaction: L-threonine is first activated by ATP to form Thr-AMP and then transferred to the acceptor end of tRNA(Thr). Also edits incorrectly charged L-seryl-tRNA(Thr). This chain is Threonine--tRNA ligase, found in Bartonella bacilliformis (strain ATCC 35685 / KC583 / Herrer 020/F12,63).